Reading from the N-terminus, the 389-residue chain is Succinate--CoA ligase [ADP-forming] subunit beta (389 aa).

The ATP-grasp domain occupies 9–236 (RDMFEAHGVP…KDAADPLEAK (228 aa)). ATP is bound by residues Lys-45, 52–54 (GRG), Ala-94, and Glu-99. Mg(2+) contacts are provided by Asn-191 and Asp-205. Substrate contacts are provided by residues Asn-256 and 318-320 (GIT).

Belongs to the succinate/malate CoA ligase beta subunit family. In terms of assembly, heterotetramer of two alpha and two beta subunits. Mg(2+) serves as cofactor.

The catalysed reaction is succinate + ATP + CoA = succinyl-CoA + ADP + phosphate. It catalyses the reaction GTP + succinate + CoA = succinyl-CoA + GDP + phosphate. Its pathway is carbohydrate metabolism; tricarboxylic acid cycle; succinate from succinyl-CoA (ligase route): step 1/1. Functionally, succinyl-CoA synthetase functions in the citric acid cycle (TCA), coupling the hydrolysis of succinyl-CoA to the synthesis of either ATP or GTP and thus represents the only step of substrate-level phosphorylation in the TCA. The beta subunit provides nucleotide specificity of the enzyme and binds the substrate succinate, while the binding sites for coenzyme A and phosphate are found in the alpha subunit. This chain is Succinate--CoA ligase [ADP-forming] subunit beta, found in Paenarthrobacter aurescens (strain TC1).